The primary structure comprises 188 residues: uncharacterized protein (188 aa).

Positions 133–153 (PKGRPTMKLQYPKMPPKPKTR) are disordered.

The protein belongs to the IS150/IS1296 orfA family.

This is an uncharacterized protein from Haemophilus influenzae (strain ATCC 51907 / DSM 11121 / KW20 / Rd).